A 1268-amino-acid chain; its full sequence is Vigilin (1268 aa).

Position 2 is an N-acetylserine (S2). T8 bears the Phosphothreonine mark. A phosphoserine mark is found at S11, S31, and S35. 7 KH domains span residues 150-212 (QASA…RHEV), 222-284 (RAVK…VARI), 295-357 (TTTI…LTEV), 364-424 (FTVS…QEQI), 435-497 (MDYV…KREL), 507-570 (ERTK…TKYM), and 581-643 (SYSI…RSRI). 2 positions are modified to phosphothreonine: T295 and T296. S317 bears the Phosphoserine mark. Y437 is subject to Phosphotyrosine. S645 is subject to Phosphoserine. KH domains are found at residues 653–716 (IAEV…KKQL), 727–790 (SFTV…QKEL), 800–863 (VVED…KKRI), 873–967 (QVTL…KEAL), 972–1034 (PVTI…KAGL), 1052–1117 (SFKL…RDAI), and 1127–1190 (MVSE…IDHI). Positions 910–946 (PDREENPVHSVEPSIQENGDEAGEGREAKETDPGSPR) are disordered. A compositionally biased stretch (basic and acidic residues) spans 932-946 (GEGREAKETDPGSPR). The residue at position 991 (K991) is an N6-acetyllysine. Residues 1214-1268 (PAHEESKAPSKGFVVRDAPWTSNSSEKAPDMSSSEEIPTFGAQVAPKTLPWGPKR) form a disordered region. The segment covering 1233–1249 (WTSNSSEKAPDMSSSEE) has biased composition (polar residues). Position 1247 is a phosphoserine (S1247).

It is found in the cytoplasm. It localises to the nucleus. Functionally, appears to play a role in cell sterol metabolism. It may function to protect cells from over-accumulation of cholesterol. In Rattus norvegicus (Rat), this protein is Vigilin (Hdlbp).